Consider the following 223-residue polypeptide: MIF4G domain-containing protein B (223 aa).

An MIF4G domain is found at 9 to 206 (DYKIQGFDAD…LEMIEYRAAG (198 aa)).

It belongs to the MIF4GD family. As to quaternary structure, interacts with eif4g1, eif4g2 and slbp; probably tethered by SLBP to the 3'-end of mRNAs ending with the histone stem-loop, it also interacts with eif4g1 which is bound to their 5'-end.

It localises to the cytoplasm. The protein resides in the nucleus. In terms of biological role, functions in replication-dependent translation of histone mRNAs which differ from other eukaryotic mRNAs in that they do not end with a poly-A tail but a stem-loop. May participate in circularizing those mRNAs specifically enhancing their translation. The protein is MIF4G domain-containing protein B (mif4gd-b) of Xenopus laevis (African clawed frog).